The chain runs to 336 residues: Nuclear envelope-associated protein 3 (336 aa).

Coiled-coil stretches lie at residues 14–87 and 128–261; these read LKDL…IRAS and VLSK…LKKK. The Bipartite nuclear localization signal signature appears at 240–261; sequence KTKELEDQVENQRRIDQELKKK. Residues 313 to 330 form a helical membrane-spanning segment; the sequence is LWDKSGFKIVVSMSMLIL.

Forms homomers and heteromers with NEAP1 and NEAP2. Interacts with SUN1 and SUN2.

The protein resides in the nucleus inner membrane. The protein localises to the nucleus. Its subcellular location is the nucleoplasm. This Arabidopsis thaliana (Mouse-ear cress) protein is Nuclear envelope-associated protein 3.